The following is a 977-amino-acid chain: Protein bicaudal C homolog 1 (977 aa).

The disordered stretch occupies residues 1–43 (MASQSEPGYLAAAQSDPGSNSERSTDSPVAGSEDDLVAAAPLL). 3 positions are modified to phosphoserine: Ser-27, Ser-32, and Ser-45. KH domains follow at residues 134–201 (RVTL…RARI) and 286–350 (PVST…RQYL). Position 400 is an N6-acetyllysine (Lys-400). A compositionally biased stretch (polar residues) spans 590–621 (SLGEKVLSSNHGDPSMQTAGPEQASPKSNSVE). Disordered stretches follow at residues 590 to 622 (SLGE…SVEG), 667 to 702 (GTKN…GSER), and 794 to 848 (EGSS…KSRE). 2 positions are modified to phosphoserine: Ser-614 and Ser-681. A compositionally biased stretch (basic and acidic residues) spans 692-702 (LADKKAPGSER). The span at 794–803 (EGSSLSLSRS) shows a compositional bias: low complexity. The SAM domain occupies 875–938 (FKGSDLPELF…LLAISELSKN (64 aa)).

Belongs to the BicC family. As to quaternary structure, interacts (via KH domains) with ANKS6 (via SAM domain) in an RNA-dependent manner. Interacts with ANKS3. In terms of tissue distribution, in the adult, predominantly expressed in heart and kidney. In 8 week old mice, expressed in growing primary oocytes and in the stromal cells of the theca.

Its subcellular location is the cytoplasm. Putative RNA-binding protein. May be involved in regulating gene expression during embryonic development. This is Protein bicaudal C homolog 1 (Bicc1) from Mus musculus (Mouse).